A 156-amino-acid polypeptide reads, in one-letter code: Protein eva-1 homolog A (156 aa).

A helical membrane pass occupies residues 40–60 (ALYFVSGVCIGLFLTLAALVM). The segment at 79–100 (DRECSDSSDSEDGSEDTASDLS) is disordered. Positions 84-96 (DSSDSEDGSEDTA) are enriched in acidic residues. A Phosphothreonine modification is found at T110. Phosphoserine is present on S118.

The protein belongs to the EVA1 family.

It localises to the endoplasmic reticulum membrane. The protein resides in the lysosome membrane. Functionally, acts as a regulator of programmed cell death, mediating both autophagy and apoptosis. This is Protein eva-1 homolog A (Eva1a) from Mus musculus (Mouse).